The sequence spans 298 residues: Mitochondrial dicarboxylate transporter (298 aa).

Solcar repeat units lie at residues 11-95, 103-195, and 205-289; these read KNIK…LKEN, TNMA…FKNY, and SKNY…LKKH. The next 6 membrane-spanning stretches (helical) occupy residues 17 to 37, 58 to 76, 105 to 126, 170 to 189, 211 to 231, and 265 to 283; these read WWYG…LDLA, ILAN…AAVL, MAYL…GNFA, GWKP…VVTY, LTAS…ADVM, and WLPS…FFAI.

Belongs to the mitochondrial carrier (TC 2.A.29) family. As to quaternary structure, homodimer. Binds to the TIM22 translocation complex during import.

Its subcellular location is the mitochondrion inner membrane. In terms of biological role, mitochondrial dicarboxylic transporter catalyzing the exchange of dicarboxylic acids like malate and succinate for inorganic phosphate. Required for growth on ethanol and acetate. This is Mitochondrial dicarboxylate transporter (DIC1) from Saccharomyces cerevisiae (strain ATCC 204508 / S288c) (Baker's yeast).